We begin with the raw amino-acid sequence, 465 residues long: Serine/threonine-protein kinase 38 (465 aa).

Residue Ala-2 is modified to N-acetylalanine. Residues 62–87 (KRLRRSAHARKETEFLRLKRTRLGLE) form an interaction with S100B region. Thr-74 carries the phosphothreonine modification. A Protein kinase domain is found at 89–382 (FESLKVIGRG…VEEIKSNSFF (294 aa)). Residues 95 to 103 (IGRGAFGEV) and Lys-118 contribute to the ATP site. Asp-212 acts as the Proton acceptor in catalysis. Ser-264 is subject to Phosphoserine. Ser-281 carries the phosphoserine; by autocatalysis modification. The short motif at 306 to 311 (WSLGVI) is the UFM1-interacting motif (UFIM) element. Residues 383-455 (EGVDWEHIRE…KRFEGLTARG (73 aa)) enclose the AGC-kinase C-terminal domain. A Phosphothreonine; by STK24/MST3 modification is found at Thr-444.

This sequence belongs to the protein kinase superfamily. AGC Ser/Thr protein kinase family. In terms of assembly, homodimeric S100B binds two molecules of STK38. Interacts with MOB1 and MOB2. Interacts with MAP3K1 and MAP3K2 (via the kinase catalytic domain). Forms a tripartite complex with MOBKL1B and STK3/MST2. Interacts with MICAL1; leading to inhibit the protein kinase activity by antagonizing activation by MST1/STK4. It depends on Mg(2+) as a cofactor. ISGylated. Post-translationally, phosphorylated by STK3/MST2 and this is enhanced by MOBKL1B. As to expression, ubiquitously expressed with highest levels observed in peripheral blood leukocytes.

It is found in the nucleus. The protein resides in the cytoplasm. It localises to the chromosome. It carries out the reaction L-seryl-[protein] + ATP = O-phospho-L-seryl-[protein] + ADP + H(+). The enzyme catalyses L-threonyl-[protein] + ATP = O-phospho-L-threonyl-[protein] + ADP + H(+). Its activity is regulated as follows. Activated by binding of S100B which releases autoinhibitory N-lobe interactions, enabling ATP to bind and the autophosphorylation of Ser-281. Thr-444 then undergoes calcium-dependent phosphorylation by STK24/MST3. Interactions between phosphorylated Thr-444 and the N-lobe promote additional structural changes that complete the activation of the kinase. Autoinhibition is also released by the binding of MOB1/MOBKL1A and MOB2/HCCA2 to the N-terminal of STK38. Its function is as follows. Serine/threonine-protein kinase that acts as a negative regulator of MAP3K1/2 signaling. Converts MAP3K2 from its phosphorylated form to its non-phosphorylated form and inhibits autophosphorylation of MAP3K2. Acts as an ufmylation 'reader' in a kinase-independent manner: specifically recognizes and binds mono-ufmylated histone H4 in response to DNA damage, promoting the recruitment of SUV39H1 to the double-strand breaks, resulting in ATM activation. The polypeptide is Serine/threonine-protein kinase 38 (Homo sapiens (Human)).